A 162-amino-acid chain; its full sequence is Shikimate kinase (162 aa).

Position 11 to 16 (11 to 16 (GSGKSS)) interacts with ATP. Ser15 is a Mg(2+) binding site. Substrate is bound by residues Asp33, Arg57, and Gly80. Arg116 is an ATP binding site. Residue Arg132 participates in substrate binding.

This sequence belongs to the shikimate kinase family. As to quaternary structure, monomer. The cofactor is Mg(2+).

It is found in the cytoplasm. The catalysed reaction is shikimate + ATP = 3-phosphoshikimate + ADP + H(+). It functions in the pathway metabolic intermediate biosynthesis; chorismate biosynthesis; chorismate from D-erythrose 4-phosphate and phosphoenolpyruvate: step 5/7. Functionally, catalyzes the specific phosphorylation of the 3-hydroxyl group of shikimic acid using ATP as a cosubstrate. The sequence is that of Shikimate kinase from Helicobacter acinonychis (strain Sheeba).